A 291-amino-acid chain; its full sequence is MFIIELIKGIILGIVEGLTEFAPVSSTGHMILVDDMWLKSSEFLGSQSAFTFKIVIQLGSVFAAAWVFRERFLEILHIGKHKHVEGDNNQQRRSKPRRLNLLHVLVGMVPAGILGLLFDDFIEEHLFSVPTVMIGLFVGAIYMIIADKYSAKVKNPQTVDQISYFQAFVIGISQAVAMWPGFSRSGSTISTGVLMKLNHKAASDFTFIMAVPIMLAASGLSLLKHYQDIQIADIPFYILGFLAAFTVGLIAIKTFLHLINKIKLIPFAIYRIVLVIFIAILYFGFGIGKGI.

The next 8 membrane-spanning stretches (helical) occupy residues 1–21 (MFII…LTEF), 48–68 (SAFT…AWVF), 102–122 (LHVL…DDFI), 126–146 (LFSV…MIIA), 162–182 (ISYF…WPGF), 203–223 (SDFT…LSLL), 231–251 (IADI…GLIA), and 267–287 (FAIY…GFGI).

This sequence belongs to the UppP family.

It localises to the cell membrane. It carries out the reaction di-trans,octa-cis-undecaprenyl diphosphate + H2O = di-trans,octa-cis-undecaprenyl phosphate + phosphate + H(+). Its function is as follows. Catalyzes the dephosphorylation of undecaprenyl diphosphate (UPP). Confers resistance to bacitracin. The protein is Undecaprenyl-diphosphatase of Staphylococcus aureus (strain MRSA252).